The primary structure comprises 84 residues: Small ribosomal subunit protein uS17 (84 aa).

This sequence belongs to the universal ribosomal protein uS17 family. In terms of assembly, part of the 30S ribosomal subunit.

In terms of biological role, one of the primary rRNA binding proteins, it binds specifically to the 5'-end of 16S ribosomal RNA. The protein is Small ribosomal subunit protein uS17 of Glaesserella parasuis serovar 5 (strain SH0165) (Haemophilus parasuis).